The chain runs to 914 residues: Alanine--tRNA ligase (914 aa).

H613, H617, C717, and H721 together coordinate Zn(2+).

It belongs to the class-II aminoacyl-tRNA synthetase family. Zn(2+) is required as a cofactor.

It localises to the cytoplasm. It catalyses the reaction tRNA(Ala) + L-alanine + ATP = L-alanyl-tRNA(Ala) + AMP + diphosphate. Its function is as follows. Catalyzes the attachment of alanine to tRNA(Ala) in a two-step reaction: alanine is first activated by ATP to form Ala-AMP and then transferred to the acceptor end of tRNA(Ala). Also edits incorrectly charged Ser-tRNA(Ala) and Gly-tRNA(Ala) via its editing domain. The polypeptide is Alanine--tRNA ligase (Pyrococcus furiosus (strain ATCC 43587 / DSM 3638 / JCM 8422 / Vc1)).